Consider the following 488-residue polypeptide: Teichuronic acid biosynthesis protein TuaE (488 aa).

Helical transmembrane passes span 7–29 (AVHTLALLAAAIFGVVLLLGAIH), 35–57 (MQMAAVLAVLAIGLFLLTLATAF), 64–86 (FMAVIYILIACTFLNNAFFAIHL), 91–110 (LFLYRLLLIAAGCLHIFGMV), 122–144 (LQVKGILLFFAFWFIYGLVSLLW), 154–173 (YLALLAMGIFFIYLIVMYVQ), 180–202 (IVYAIWLVMTVFLMIIGFYNHIT), 222–244 (PTSVFFNQNDFATFLSISFFFYI), 257–274 (AIGLVLSLCALYLIFATG), 279–298 (LLGIFAGIAVYIFIVLPPVL), 303–322 (IWLSAAGIALFAVLFASKIY), 354–376 (NAWHFFLDSYGFGVGAGNVSYYL), 397–419 (ILANFGLFIMLGYLSVYAYLIWV), and 459–476 (LFFHWVFMALVIAAVNVL).

The protein localises to the cell membrane. The protein operates within cell wall biogenesis; teichuronic acid biosynthesis. Its function is as follows. Might be involved in the polymerization of teichuronic acid repeating units after their translocation to the outer surface of the membrane. This Bacillus subtilis (strain 168) protein is Teichuronic acid biosynthesis protein TuaE (tuaE).